Consider the following 357-residue polypeptide: Alanine racemase (357 aa).

K35 (proton acceptor; specific for D-alanine) is an active-site residue. An N6-(pyridoxal phosphate)lysine modification is found at K35. Position 130 (R130) interacts with substrate. Y255 acts as the Proton acceptor; specific for L-alanine in catalysis. M303 is a binding site for substrate.

The protein belongs to the alanine racemase family. Pyridoxal 5'-phosphate is required as a cofactor.

The catalysed reaction is L-alanine = D-alanine. It functions in the pathway amino-acid biosynthesis; D-alanine biosynthesis; D-alanine from L-alanine: step 1/1. In terms of biological role, catalyzes the interconversion of L-alanine and D-alanine. May also act on other amino acids. This Nitrosospira multiformis (strain ATCC 25196 / NCIMB 11849 / C 71) protein is Alanine racemase (alr).